The primary structure comprises 659 residues: UvrABC system protein B (659 aa).

Residues 25 to 414 (EGVRRGAREQ…PSLVVEQIVR (390 aa)) form the Helicase ATP-binding domain. 38–45 (GATGTGKT) contacts ATP. Residues 91 to 114 (YYDYYQPEAYIPTTDTYIEKDALI) carry the Beta-hairpin motif. A Helicase C-terminal domain is found at 431 to 597 (QIDDLYAEIR…TIVKPVRDVI (167 aa)). One can recognise a UVR domain in the interval 620 to 655 (PKVVAKLRKEMMQAAKDLDFERAAEIRDIIFELEKK).

The protein belongs to the UvrB family. As to quaternary structure, forms a heterotetramer with UvrA during the search for lesions. Interacts with UvrC in an incision complex.

Its subcellular location is the cytoplasm. Functionally, the UvrABC repair system catalyzes the recognition and processing of DNA lesions. A damage recognition complex composed of 2 UvrA and 2 UvrB subunits scans DNA for abnormalities. Upon binding of the UvrA(2)B(2) complex to a putative damaged site, the DNA wraps around one UvrB monomer. DNA wrap is dependent on ATP binding by UvrB and probably causes local melting of the DNA helix, facilitating insertion of UvrB beta-hairpin between the DNA strands. Then UvrB probes one DNA strand for the presence of a lesion. If a lesion is found the UvrA subunits dissociate and the UvrB-DNA preincision complex is formed. This complex is subsequently bound by UvrC and the second UvrB is released. If no lesion is found, the DNA wraps around the other UvrB subunit that will check the other stand for damage. This chain is UvrABC system protein B, found in Symbiobacterium thermophilum (strain DSM 24528 / JCM 14929 / IAM 14863 / T).